A 382-amino-acid polypeptide reads, in one-letter code: Apolipoprotein A-IV (382 aa).

The N-terminal stretch at 1 to 20 (MFLKAVVLSLALVAVTGARA) is a signal peptide. 13 tandem repeats follow at residues 33 to 54 (DYFS…KSEL), 60 to 81 (TLFQ…KKLV), 82 to 103 (PFAT…EEIR), 115 to 136 (PHAT…QRLG), 137 to 158 (PFTG…RQLK), 159 to 180 (PYAE…ASVA), 181 to 202 (PYAD…GSLT), 203 to 224 (PYAE…RSLA), 225 to 246 (PYAQ…FQMK), 247 to 268 (KQAE…QKLV), 269 to 286 (PVAE…EGLQ), 287 to 308 (KSLL…LKVE), and 309 to 330 (PYGE…QKLG). Positions 33 to 330 (DYFSQLGSNA…QVEDLRQKLG (298 aa)) are 13 X 22 AA approximate tandem repeats. Positions 361–382 (EASQGQSQALPAQEKAQAPLEG) are disordered.

The protein belongs to the apolipoprotein A1/A4/E family. As to quaternary structure, homodimer. Secreted in plasma.

The protein resides in the secreted. Its function is as follows. May have a role in chylomicrons and VLDL secretion and catabolism. Required for efficient activation of lipoprotein lipase by ApoC-II; potent activator of LCAT. Apoa-IV is a major component of HDL and chylomicrons. This Sus scrofa (Pig) protein is Apolipoprotein A-IV (APOA4).